A 547-amino-acid chain; its full sequence is Cilia- and flagella- associated protein 210 (547 aa).

Residues 184 to 254 (KLNVEKAFKE…EIEMKKKQGK (71 aa)) adopt a coiled-coil conformation. Positions 210–237 (KDHLKQIKEHEEEEERRRKEEEKDAEEI) are disordered.

In terms of assembly, microtubule inner protein component of sperm flagellar doublet microtubules. Expressed in trachea multiciliated cells.

It localises to the cytoplasm. The protein resides in the cytoskeleton. It is found in the cilium axoneme. The protein localises to the flagellum axoneme. Functionally, microtubule inner protein (MIP) part of the dynein-decorated doublet microtubules (DMTs) in cilia axoneme, which is required for motile cilia beating. The sequence is that of Cilia- and flagella- associated protein 210 (CFAP210) from Bos taurus (Bovine).